Here is a 382-residue protein sequence, read N- to C-terminus: Per os infectivity factor 2 (382 aa).

In terms of assembly, forms the PIF complex together with PIF1 and PIF3. The complex also interacts with per os infectivity factor PIF0.

In terms of biological role, per os infectivity factor that mediates the specific binding of occluded virions (ODV) to the host midgut target cells. The polypeptide is Per os infectivity factor 2 (Autographa californica nuclear polyhedrosis virus (AcMNPV)).